A 551-amino-acid chain; its full sequence is Solute carrier family 22 member 27 (551 aa).

Residues 1–15 lie on the Cytoplasmic side of the membrane; the sequence is MSFQELLNQVGSLGR. The chain crosses the membrane as a helical span at residues 16-36; the sequence is FQILQIVFLLLLNAIVVPHIA. Over 37 to 145 the chain is Extracellular; sequence MENFTAAIPN…DLVCESQALN (109 aa). N-linked (GlcNAc...) asparagine glycosylation is found at Asn-39, Asn-56, Asn-62, Asn-102, and Asn-107. The helical transmembrane segment at 146–166 threads the bilayer; that stretch reads SVTKFSFMIGLFIGGIICGHL. Over 167–173 the chain is Cytoplasmic; it reads SDRLGRK. Residues 174–194 traverse the membrane as a helical segment; sequence FILTCALLQFAITETCVAFAP. The Extracellular segment spans residues 195-203; that stretch reads SFFIYCSLR. The chain crosses the membrane as a helical span at residues 204 to 224; it reads FLAGLSVEPILVNSHLLMLEW. The Cytoplasmic portion of the chain corresponds to 225–234; that stretch reads TSPKFLTMMA. Residues 235–255 traverse the membrane as a helical segment; sequence ALLSCAPNIGYMISAGLAFLF. The Extracellular portion of the chain corresponds to 256–258; sequence RIW. Residues 259 to 279 form a helical membrane-spanning segment; that stretch reads HHLQLTMSVPIFFFLILTRWL. Topologically, residues 280-348 are cytoplasmic; the sequence is SESARWLIVT…LFHTSILRKR (69 aa). The helical transmembrane segment at 349 to 369 threads the bilayer; sequence ICVLSFMRLFFTVSIFGLAVH. The Extracellular portion of the chain corresponds to 370-376; the sequence is LQHLSSN. Residues 377–397 form a helical membrane-spanning segment; the sequence is IILLQFLISALAILVSVIGPF. Residues 398 to 405 are Cytoplasmic-facing; that stretch reads VLNHIGRR. The chain crosses the membrane as a helical span at residues 406-426; sequence ITYLVLMSLRGIFILIAVFVP. The Extracellular segment spans residues 427 to 432; it reads QEMQTL. A helical membrane pass occupies residues 433 to 453; it reads RIIMATLAEGISSLCVGVSRL. Topologically, residues 454-467 are cytoplasmic; that stretch reads HTNELLPTTLRATA. A helical transmembrane segment spans residues 468 to 488; that stretch reads VGVIGFFGNSGSFLSPLFMLL. Residues 489 to 494 are Extracellular-facing; it reads ATYYAN. Residues 495 to 515 form a helical membrane-spanning segment; it reads MPWIFYGGFSIFNAFTVFLLP. The Cytoplasmic portion of the chain corresponds to 516-551; sequence ETKNQPLPDSTHDVGNDWKESRKGKKEDPIIKVTRF. The disordered stretch occupies residues 523–551; sequence PDSTHDVGNDWKESRKGKKEDPIIKVTRF. Over residues 525-545 the composition is skewed to basic and acidic residues; sequence STHDVGNDWKESRKGKKEDPI.

The protein belongs to the major facilitator (TC 2.A.1) superfamily. Organic cation transporter (TC 2.A.1.19) family. As to expression, expressed in proximal kidney tubules, and in liver hepatocytes (at protein level).

It is found in the cell membrane. Does not appear to have transporter activity. In terms of biological role, sodium-independent organic anion transporter which exhibits high specificity for L-carnitine. Can also transport salicylic acid and the drug cimetidine. This is Solute carrier family 22 member 27 from Mus musculus (Mouse).